Here is a 409-residue protein sequence, read N- to C-terminus: Probable tRNA pseudouridine synthase D (409 aa).

The Nucleophile role is filled by D73. The TRUD domain maps to 146–365 (GFPNFFGDQR…SSGDRRIISA (220 aa)).

This sequence belongs to the pseudouridine synthase TruD family.

It carries out the reaction uridine(13) in tRNA = pseudouridine(13) in tRNA. Could be responsible for synthesis of pseudouridine from uracil-13 in transfer RNAs. The polypeptide is Probable tRNA pseudouridine synthase D (Thermoplasma volcanium (strain ATCC 51530 / DSM 4299 / JCM 9571 / NBRC 15438 / GSS1)).